We begin with the raw amino-acid sequence, 415 residues long: ATP-dependent RNA helicase RhlB (415 aa).

A Q motif motif is present at residues 9–37; the sequence is QRFSDLSLHPIVRDTLAKKGFDFCTPIQA. In terms of domain architecture, Helicase ATP-binding spans 40–218; it reads LPISLNGRDV…FEDMNDPEYI (179 aa). 53 to 60 contacts ATP; that stretch reads AQTGTGKT. The short motif at 164 to 167 is the DEAD box element; it reads DEAD. One can recognise a Helicase C-terminal domain in the interval 241 to 389; sequence DKMALLLTLM…VSQYETEALL (149 aa).

This sequence belongs to the DEAD box helicase family. RhlB subfamily. Component of the RNA degradosome, which is a multiprotein complex involved in RNA processing and mRNA degradation.

Its subcellular location is the cytoplasm. The enzyme catalyses ATP + H2O = ADP + phosphate + H(+). DEAD-box RNA helicase involved in RNA degradation. Has RNA-dependent ATPase activity and unwinds double-stranded RNA. In Haemophilus influenzae (strain PittEE), this protein is ATP-dependent RNA helicase RhlB.